Consider the following 188-residue polypeptide: Phosphoribosylglycinamide formyltransferase (188 aa).

Glycine 12 to asparagine 14 is a binding site for N(1)-(5-phospho-beta-D-ribosyl)glycinamide. (6R)-10-formyltetrahydrofolate is bound by residues lysine 66, methionine 91–isoleucine 94, and asparagine 108. Residue histidine 110 is the Proton donor of the active site.

It belongs to the GART family.

It carries out the reaction N(1)-(5-phospho-beta-D-ribosyl)glycinamide + (6R)-10-formyltetrahydrofolate = N(2)-formyl-N(1)-(5-phospho-beta-D-ribosyl)glycinamide + (6S)-5,6,7,8-tetrahydrofolate + H(+). It functions in the pathway purine metabolism; IMP biosynthesis via de novo pathway; N(2)-formyl-N(1)-(5-phospho-D-ribosyl)glycinamide from N(1)-(5-phospho-D-ribosyl)glycinamide (10-formyl THF route): step 1/1. Functionally, catalyzes the transfer of a formyl group from 10-formyltetrahydrofolate to 5-phospho-ribosyl-glycinamide (GAR), producing 5-phospho-ribosyl-N-formylglycinamide (FGAR) and tetrahydrofolate. The chain is Phosphoribosylglycinamide formyltransferase from Staphylococcus aureus (strain Mu50 / ATCC 700699).